We begin with the raw amino-acid sequence, 189 residues long: Large ribosomal subunit protein bL9 (189 aa).

The protein belongs to the bacterial ribosomal protein bL9 family.

In terms of biological role, binds to the 23S rRNA. The protein is Large ribosomal subunit protein bL9 of Brucella ovis (strain ATCC 25840 / 63/290 / NCTC 10512).